A 415-amino-acid polypeptide reads, in one-letter code: Plasminogen activator inhibitor 2 (415 aa).

A disulfide bond links C5 and C405. 3 N-linked (GlcNAc...) asparagine glycosylation sites follow: N75, N115, and N339.

Belongs to the serpin family. Ov-serpin subfamily. Interacts with PSMB1. In terms of processing, the signal sequence is not cleaved.

Its subcellular location is the cytoplasm. It localises to the secreted. The protein resides in the extracellular space. Functionally, inhibits urokinase-type plasminogen activator. The monocyte derived PAI-2 is distinct from the endothelial cell-derived PAI-1. This is Plasminogen activator inhibitor 2 (SERPINB2) from Homo sapiens (Human).